We begin with the raw amino-acid sequence, 285 residues long: HTH-type transcriptional regulator YofA (285 aa).

The region spanning 1-58 is the HTH lysR-type domain; sequence MESGDLKIFQAVAREGSITKAAQMLNYVQSNVTARVHNLEEDLNIRLFHRTNRGMKLT. Residues 18–37 constitute a DNA-binding region (H-T-H motif); that stretch reads ITKAAQMLNYVQSNVTARVH.

Belongs to the LysR transcriptional regulatory family.

It is found in the cytoplasm. In terms of biological role, regulates expression of the cell division protein ftsW, and is essential for cell viability during stationary phase. This chain is HTH-type transcriptional regulator YofA (yofA), found in Bacillus subtilis (strain 168).